The sequence spans 604 residues: Elongation factor 4 (604 aa).

The tr-type G domain occupies 7-189 (SKIRNFCIIA…SIVHLVPPPS (183 aa)). Residues 19–24 (DHGKST) and 136–139 (NKID) each bind GTP.

The protein belongs to the TRAFAC class translation factor GTPase superfamily. Classic translation factor GTPase family. LepA subfamily.

It is found in the cell inner membrane. The enzyme catalyses GTP + H2O = GDP + phosphate + H(+). Its function is as follows. Required for accurate and efficient protein synthesis under certain stress conditions. May act as a fidelity factor of the translation reaction, by catalyzing a one-codon backward translocation of tRNAs on improperly translocated ribosomes. Back-translocation proceeds from a post-translocation (POST) complex to a pre-translocation (PRE) complex, thus giving elongation factor G a second chance to translocate the tRNAs correctly. Binds to ribosomes in a GTP-dependent manner. This is Elongation factor 4 from Synechococcus elongatus (strain ATCC 33912 / PCC 7942 / FACHB-805) (Anacystis nidulans R2).